The following is a 132-amino-acid chain: Mini-ribonuclease 3 (132 aa).

Residue Asp-17 is part of the active site.

Belongs to the MrnC RNase family. As to quaternary structure, homodimer. The cofactor is Mg(2+).

The protein resides in the cytoplasm. Involved in correct processing of both the 5' and 3' ends of 23S rRNA precursor. Processes 30S rRNA precursor transcript even in absence of ribonuclease 3 (Rnc); Rnc processes 30S rRNA into smaller rRNA precursors. The protein is Mini-ribonuclease 3 of Enterococcus faecalis (strain ATCC 700802 / V583).